Reading from the N-terminus, the 359-residue chain is Peptide chain release factor 1 (359 aa).

Gln236 bears the N5-methylglutamine mark. Residues 288–307 are disordered; that stretch reads QDEQDAERKSTIGTGDRSER. The span at 293–307 shows a compositional bias: basic and acidic residues; sequence AERKSTIGTGDRSER.

The protein belongs to the prokaryotic/mitochondrial release factor family. In terms of processing, methylated by PrmC. Methylation increases the termination efficiency of RF1.

It is found in the cytoplasm. Functionally, peptide chain release factor 1 directs the termination of translation in response to the peptide chain termination codons UAG and UAA. The sequence is that of Peptide chain release factor 1 from Streptococcus sanguinis (strain SK36).